The following is a 150-amino-acid chain: Allograft inflammatory factor 1-like (150 aa).

Position 2 is an N-acetylserine (S2). At S2 the chain carries Phosphoserine. Positions 47-82 (EKLAAFKEKYMEFDLNNEGEIDLMSLKRMMEKLGVP) constitute an EF-hand 1 domain. Ca(2+) contacts are provided by D60, N62, E64, and E66. The EF-hand 2; degenerate domain occupies 83–117 (KTHLEMKKMISEVTGGVSDTISYRDFVNMMLGKRS). The interval 129–150 (KANESSPKPAGPPPERDIASLP) is disordered. S134 carries the phosphoserine modification.

Homodimer (Potential). Monomer.

The protein localises to the cytoplasm. The protein resides in the cytoskeleton. It localises to the cell projection. It is found in the ruffle membrane. Its function is as follows. Actin-binding protein that promotes actin bundling. May neither bind calcium nor depend on calcium for function. This is Allograft inflammatory factor 1-like (Aif1l) from Mus musculus (Mouse).